The primary structure comprises 267 residues: Serine acetyltransferase (267 aa).

Belongs to the transferase hexapeptide repeat family.

It localises to the cytoplasm. The enzyme catalyses L-serine + acetyl-CoA = O-acetyl-L-serine + CoA. It participates in amino-acid biosynthesis; L-cysteine biosynthesis; L-cysteine from L-serine: step 1/2. This chain is Serine acetyltransferase (cysE), found in Haemophilus influenzae (strain ATCC 51907 / DSM 11121 / KW20 / Rd).